A 976-amino-acid chain; its full sequence is Protein phosphatase 1 regulatory subunit 12B (976 aa).

Over residues 1–24 the composition is skewed to basic and acidic residues; the sequence is MAELEHLGGKRAESARARRAEQLR. Positions 1 to 52 are disordered; sequence MAELEHLGGKRAESARARRAEQLRRWRGSLTEQEPAERQGAGRQLQTRRGSP. Serine 29 carries the post-translational modification Phosphoserine. ANK repeat units follow at residues 57 to 86, 90 to 119, 123 to 152, 216 to 245, and 249 to 278; these read EDGAVFLAACSSGDTDEVKKLLARGADINT, DGLTALHQACIDENLDMVKFLVENRANVNQ, EGWTPLHAAASCGYLNIAEYFISHGASVGI, SGATALHVAAAKGYSEVLRLLIQAGYELNV, and DGWTPLHAAAHWGVKEACSILAEALCDMDI. Positions 342–489 are disordered; it reads EEIPKSQDTE…LDDKDKEREN (148 aa). The segment covering 362-374 has biased composition (acidic residues); the sequence is SEEEEGEDEVSES. Residues 375 to 385 are compositionally biased toward basic and acidic residues; it reads ETEKEADKKPE. The segment covering 411–423 has biased composition (low complexity); sequence FSASSARRLSSLF. The residue at position 444 (threonine 444) is a Phosphothreonine. Low complexity predominate over residues 465 to 477; the sequence is SSIYRSSSSPRIS. Basic and acidic residues predominate over residues 480 to 489; the sequence is LDDKDKEREN. Phosphoserine is present on serine 502. The disordered stretch occupies residues 503–873; sequence STSDIEEKEN…LTSRVEEDSN (371 aa). Polar residues predominate over residues 538-564; the sequence is ETPQTIAPSTYTSTYLKRTPYKSQADS. The span at 622–631 shows a compositional bias: basic and acidic residues; that stretch reads VRDEEAESLR. Residues 632–642 are compositionally biased toward basic residues; that stretch reads KARSRQARQTR. The residue at position 645 (threonine 645) is a Phosphothreonine. Positions 655–679 are enriched in basic and acidic residues; that stretch reads EAEKTFSRSRAERQAQEQPGEKLED. Polar residues-rich tracts occupy residues 722–739 and 747–763; these read DKPTTPVSPSASRPSLYT and SRASGPDSENSETSTHA. A compositionally biased stretch (basic and acidic residues) spans 765–777; that stretch reads AAKEMDTSEKGEA. The segment covering 791–801 has biased composition (basic residues); the sequence is ERRRAKDRRRG. The residue at position 802 (threonine 802) is a Phosphothreonine. A compositionally biased stretch (basic and acidic residues) spans 818–830; the sequence is EEVKEALHERLSR. Serine 833 is modified (phosphoserine). A compositionally biased stretch (basic and acidic residues) spans 844–860; sequence YSDRASARARREAREAR. Serine 941 carries the post-translational modification Phosphoserine.

As to quaternary structure, PP1 comprises a catalytic subunit, PPP1CA, PPP1CB or PPP1CC, and one or several targeting or regulatory subunits. PPP1R12B mediates binding to myosin. Isoform 3 and isoform 4 bind PPP1R12A, but not isoform 1 of PPP1R12B itself. Binds IL16.

Its subcellular location is the cytoplasm. It is found in the cytoskeleton. The protein localises to the stress fiber. Regulates myosin phosphatase activity. Augments Ca(2+) sensitivity of the contractile apparatus. This Mus musculus (Mouse) protein is Protein phosphatase 1 regulatory subunit 12B (Ppp1r12b).